We begin with the raw amino-acid sequence, 235 residues long: Leucyl/phenylalanyl-tRNA--protein transferase (235 aa).

The protein belongs to the L/F-transferase family.

Its subcellular location is the cytoplasm. It catalyses the reaction N-terminal L-lysyl-[protein] + L-leucyl-tRNA(Leu) = N-terminal L-leucyl-L-lysyl-[protein] + tRNA(Leu) + H(+). It carries out the reaction N-terminal L-arginyl-[protein] + L-leucyl-tRNA(Leu) = N-terminal L-leucyl-L-arginyl-[protein] + tRNA(Leu) + H(+). The catalysed reaction is L-phenylalanyl-tRNA(Phe) + an N-terminal L-alpha-aminoacyl-[protein] = an N-terminal L-phenylalanyl-L-alpha-aminoacyl-[protein] + tRNA(Phe). Its function is as follows. Functions in the N-end rule pathway of protein degradation where it conjugates Leu, Phe and, less efficiently, Met from aminoacyl-tRNAs to the N-termini of proteins containing an N-terminal arginine or lysine. This chain is Leucyl/phenylalanyl-tRNA--protein transferase, found in Azoarcus sp. (strain BH72).